The chain runs to 223 residues: Probable tRNA-splicing endonuclease subunit tsp-1 (223 aa).

Residues 1-55 form a disordered region; the sequence is MESGSTPPTDKQIRENEQDGTGHQGKLLARPTSTRQQQQQQQQQPSHSVSQSVSQ. Positions 30–55 are enriched in low complexity; sequence RPTSTRQQQQQQQQQPSHSVSQSVSQ.

It belongs to the SEN15 family. TRNA splicing endonuclease is a heterotetramer composed of tsp-2/sen2, tsp-1/sen15, tsp-4/sen34 and tsp-5/sen54. Interacts directly with tsp-4/sen34.

Non-catalytic subunit of the tRNA-splicing endonuclease complex, a complex responsible for identification and cleavage of the splice sites in pre-tRNA. It cleaves pre-tRNA at the 5' and 3' splice sites to release the intron. The products are an intron and two tRNA half-molecules bearing 2',3' cyclic phosphate and 5'-OH termini. There are no conserved sequences at the splice sites, but the intron is invariably located at the same site in the gene, placing the splice sites an invariant distance from the constant structural features of the tRNA body. The chain is Probable tRNA-splicing endonuclease subunit tsp-1 (tsp-1) from Neurospora crassa (strain ATCC 24698 / 74-OR23-1A / CBS 708.71 / DSM 1257 / FGSC 987).